Reading from the N-terminus, the 208-residue chain is Uracil phosphoribosyltransferase (208 aa).

5-phospho-alpha-D-ribose 1-diphosphate-binding positions include arginine 78, arginine 103, and 130–138 (DPMLATGGS). Uracil is bound by residues isoleucine 193 and 198-200 (GDA). Position 199 (aspartate 199) interacts with 5-phospho-alpha-D-ribose 1-diphosphate.

Belongs to the UPRTase family. Mg(2+) is required as a cofactor.

It catalyses the reaction UMP + diphosphate = 5-phospho-alpha-D-ribose 1-diphosphate + uracil. The protein operates within pyrimidine metabolism; UMP biosynthesis via salvage pathway; UMP from uracil: step 1/1. Its activity is regulated as follows. Allosterically activated by GTP. Functionally, catalyzes the conversion of uracil and 5-phospho-alpha-D-ribose 1-diphosphate (PRPP) to UMP and diphosphate. The polypeptide is Uracil phosphoribosyltransferase (Shewanella putrefaciens (strain CN-32 / ATCC BAA-453)).